We begin with the raw amino-acid sequence, 124 residues long: Small ribosomal subunit protein uS13 (124 aa).

A disordered region spans residues 98-124; sequence VRGQRTKTNARTRKGPKRTIAGKKKAR.

It belongs to the universal ribosomal protein uS13 family. As to quaternary structure, part of the 30S ribosomal subunit. Forms a loose heterodimer with protein S19. Forms two bridges to the 50S subunit in the 70S ribosome.

Functionally, located at the top of the head of the 30S subunit, it contacts several helices of the 16S rRNA. In the 70S ribosome it contacts the 23S rRNA (bridge B1a) and protein L5 of the 50S subunit (bridge B1b), connecting the 2 subunits; these bridges are implicated in subunit movement. Contacts the tRNAs in the A and P-sites. This is Small ribosomal subunit protein uS13 from Mycobacterium leprae (strain Br4923).